The chain runs to 59 residues: MKEGTKEEMEGKFSKAKGEIKESAGEMTGDIEMEAKGEAEKRKGEAQEKVGKIRKEFEK.

Composition is skewed to basic and acidic residues over residues 1-24 (MKEG…KESA) and 33-59 (MEAK…EFEK). Positions 1–59 (MKEGTKEEMEGKFSKAKGEIKESAGEMTGDIEMEAKGEAEKRKGEAQEKVGKIRKEFEK) are disordered.

This sequence belongs to the UPF0337 (CsbD) family.

The polypeptide is UPF0337 protein MM_2677 (Methanosarcina mazei (strain ATCC BAA-159 / DSM 3647 / Goe1 / Go1 / JCM 11833 / OCM 88) (Methanosarcina frisia)).